The following is a 382-amino-acid chain: Na(+)/H(+) antiporter NhaA 2 (382 aa).

Helical transmembrane passes span 7-27, 28-48, 52-72, 88-108, 118-138, 147-167, 170-190, 206-226, 254-274, 285-305, 325-345, and 356-376; these read AGGV…NSYL, SGFY…AFEI, LLLW…GLEV, VLPG…YASF, GWAI…SLFG, LFLL…IALF, HELS…LFVL, LVVW…GFVI, VAYF…LGGI, LGII…VCWL, GVCL…SLAF, and VKLG…LILT.

The protein belongs to the NhaA Na(+)/H(+) (TC 2.A.33) antiporter family.

The protein resides in the cell inner membrane. The catalysed reaction is Na(+)(in) + 2 H(+)(out) = Na(+)(out) + 2 H(+)(in). Functionally, na(+)/H(+) antiporter that extrudes sodium in exchange for external protons. The polypeptide is Na(+)/H(+) antiporter NhaA 2 (Saccharophagus degradans (strain 2-40 / ATCC 43961 / DSM 17024)).